We begin with the raw amino-acid sequence, 250 residues long: 2,3-bisphosphoglycerate-dependent phosphoglycerate mutase (250 aa).

Residues 10–17 (RHGESQWN), 23–24 (TG), R62, 89–92 (ERHY), K100, 116–117 (RR), and 185–186 (GN) contribute to the substrate site. The active-site Tele-phosphohistidine intermediate is H11. E89 (proton donor/acceptor) is an active-site residue.

It belongs to the phosphoglycerate mutase family. BPG-dependent PGAM subfamily. Homodimer.

The enzyme catalyses (2R)-2-phosphoglycerate = (2R)-3-phosphoglycerate. Its pathway is carbohydrate degradation; glycolysis; pyruvate from D-glyceraldehyde 3-phosphate: step 3/5. Catalyzes the interconversion of 2-phosphoglycerate and 3-phosphoglycerate. This chain is 2,3-bisphosphoglycerate-dependent phosphoglycerate mutase, found in Escherichia coli O139:H28 (strain E24377A / ETEC).